The primary structure comprises 453 residues: Bifunctional protein GlmU (453 aa).

A pyrophosphorylase region spans residues 1–231; sequence MERSSLAVIL…EKELTGCNNR (231 aa). Residues 10–13, lysine 24, glutamine 77, 82–83, 105–107, glycine 143, glutamate 157, asparagine 172, and asparagine 229 each bind UDP-N-acetyl-alpha-D-glucosamine; these read LAAG, GT, and YGD. Aspartate 107 provides a ligand contact to Mg(2+). A Mg(2+)-binding site is contributed by asparagine 229. The linker stretch occupies residues 232 to 252; sequence AELAFIERLWQERRRHELMVD. The segment at 253–453 is N-acetyltransferase; it reads GVSMIAPETV…AQKEAKKKSS (201 aa). UDP-N-acetyl-alpha-D-glucosamine is bound by residues arginine 318 and lysine 336. Residue histidine 348 is the Proton acceptor of the active site. The UDP-N-acetyl-alpha-D-glucosamine site is built by tyrosine 351 and asparagine 362. Residues alanine 365, 371–372, serine 390, serine 408, and arginine 425 each bind acetyl-CoA; that span reads NY.

It in the N-terminal section; belongs to the N-acetylglucosamine-1-phosphate uridyltransferase family. In the C-terminal section; belongs to the transferase hexapeptide repeat family. As to quaternary structure, homotrimer. Requires Mg(2+) as cofactor.

It is found in the cytoplasm. The catalysed reaction is alpha-D-glucosamine 1-phosphate + acetyl-CoA = N-acetyl-alpha-D-glucosamine 1-phosphate + CoA + H(+). It catalyses the reaction N-acetyl-alpha-D-glucosamine 1-phosphate + UTP + H(+) = UDP-N-acetyl-alpha-D-glucosamine + diphosphate. The protein operates within nucleotide-sugar biosynthesis; UDP-N-acetyl-alpha-D-glucosamine biosynthesis; N-acetyl-alpha-D-glucosamine 1-phosphate from alpha-D-glucosamine 6-phosphate (route II): step 2/2. Its pathway is nucleotide-sugar biosynthesis; UDP-N-acetyl-alpha-D-glucosamine biosynthesis; UDP-N-acetyl-alpha-D-glucosamine from N-acetyl-alpha-D-glucosamine 1-phosphate: step 1/1. It functions in the pathway bacterial outer membrane biogenesis; LPS lipid A biosynthesis. In terms of biological role, catalyzes the last two sequential reactions in the de novo biosynthetic pathway for UDP-N-acetylglucosamine (UDP-GlcNAc). The C-terminal domain catalyzes the transfer of acetyl group from acetyl coenzyme A to glucosamine-1-phosphate (GlcN-1-P) to produce N-acetylglucosamine-1-phosphate (GlcNAc-1-P), which is converted into UDP-GlcNAc by the transfer of uridine 5-monophosphate (from uridine 5-triphosphate), a reaction catalyzed by the N-terminal domain. This is Bifunctional protein GlmU from Agrobacterium fabrum (strain C58 / ATCC 33970) (Agrobacterium tumefaciens (strain C58)).